The primary structure comprises 387 residues: Thermostable celloxylanase (387 aa).

Residues 41–382 (AEDIPSLAEA…KPAFWAIVDP (342 aa)) enclose the GH10 domain. The active-site Proton donor is the Glu-185. Glu-293 (nucleophile) is an active-site residue.

The protein belongs to the glycosyl hydrolase 10 (cellulase F) family.

The enzyme catalyses Endohydrolysis of (1-&gt;4)-beta-D-glucosidic linkages in cellulose, lichenin and cereal beta-D-glucans.. It catalyses the reaction Endohydrolysis of (1-&gt;4)-beta-D-xylosidic linkages in xylans.. The protein operates within glycan degradation; xylan degradation. In terms of biological role, active toward xylan, carboxymethylcellulose, P-nitrophenyl-beta-D-xylopyranoside and P-nitrophenyl-beta-D-cellobioside. The protein is Thermostable celloxylanase (xynB) of Thermoclostridium stercorarium (Clostridium stercorarium).